Consider the following 116-residue polypeptide: NADH-ubiquinone oxidoreductase chain 3 (116 aa).

Transmembrane regions (helical) follow at residues 3-23 (LITTIITITITLSAVLATISF), 56-76 (FFLIAILFLLFDLEIALLLPL), and 87-107 (LTLIWSTAVLALLTLGLIYEW).

It belongs to the complex I subunit 3 family.

It localises to the mitochondrion membrane. The enzyme catalyses a ubiquinone + NADH + 5 H(+)(in) = a ubiquinol + NAD(+) + 4 H(+)(out). In terms of biological role, core subunit of the mitochondrial membrane respiratory chain NADH dehydrogenase (Complex I) that is believed to belong to the minimal assembly required for catalysis. Complex I functions in the transfer of electrons from NADH to the respiratory chain. The immediate electron acceptor for the enzyme is believed to be ubiquinone. The chain is NADH-ubiquinone oxidoreductase chain 3 (MT-ND3) from Oncorhynchus keta (Chum salmon).